Consider the following 162-residue polypeptide: Putative ripening-related protein 7 (162 aa).

The signal sequence occupies residues 1-30 (MAAAAASTKIVAVVVAVLLAILEMPSCAVA).

It belongs to the kiwellin family.

It localises to the secreted. This chain is Putative ripening-related protein 7, found in Oryza sativa subsp. japonica (Rice).